The primary structure comprises 456 residues: Putative sodium-coupled neutral amino acid transporter 11 (456 aa).

The disordered stretch occupies residues 1-25 (MRAGPRRQHLLPPQDNRAAVGYQRQ). A helical membrane pass occupies residues 58-78 (FNVVNSIIGSGIIDFSLILLI). N-linked (GlcNAc...) asparagine glycosylation is present at Asn94. Transmembrane regions (helical) follow at residues 98-118 (GFPGYILLSVLQFLYPFIAMI), 143-163 (VFIGRHFIIGLSTVTFTLPLS), 171-191 (LGKVSLISTGLTTLILGIVMA), 206-226 (AWVFAKPNAIQAVGVMSFAFI), 252-272 (MSIVISVFICIFFATCGYLTF), and 291-313 (VTFGRFCYGVTVILTYPMECFVT). N-linked (GlcNAc...) asparagine glycosylation occurs at Asn325. The next 3 helical transmembrane spans lie at 329–349 (VFHIVVTVMVITVATLVSLLI), 351–371 (CLGIVLELNGVLCATPLIFII), and 390–410 (IMSYVMLPIGAAVMVFGFVMA).

This sequence belongs to the amino acid/polyamine transporter 2 family.

The protein localises to the membrane. Functionally, putative sodium-dependent amino acid/proton antiporter. The sequence is that of Putative sodium-coupled neutral amino acid transporter 11 (SLC38A11) from Macaca fascicularis (Crab-eating macaque).